The primary structure comprises 251 residues: Triosephosphate isomerase 1 (251 aa).

9–11 serves as a coordination point for substrate; sequence NWK. His-95 functions as the Electrophile in the catalytic mechanism. Catalysis depends on Glu-167, which acts as the Proton acceptor. Substrate is bound by residues Gly-173, Ser-213, and 234–235; that span reads GG.

It belongs to the triosephosphate isomerase family. In terms of assembly, homodimer.

The protein resides in the cytoplasm. It catalyses the reaction D-glyceraldehyde 3-phosphate = dihydroxyacetone phosphate. The protein operates within carbohydrate biosynthesis; gluconeogenesis. It functions in the pathway carbohydrate degradation; glycolysis; D-glyceraldehyde 3-phosphate from glycerone phosphate: step 1/1. Its function is as follows. Involved in the gluconeogenesis. Catalyzes stereospecifically the conversion of dihydroxyacetone phosphate (DHAP) to D-glyceraldehyde-3-phosphate (G3P). In Listeria monocytogenes serovar 1/2a (strain ATCC BAA-679 / EGD-e), this protein is Triosephosphate isomerase 1.